Reading from the N-terminus, the 1353-residue chain is Adenylate cyclase type 9 (1353 aa).

Disordered regions lie at residues 1-27 (MASP…DSNS) and 49-71 (SISS…GGGG). At 1–117 (MASPPHQQLL…CFPQTQRRFR (117 aa)) the chain is on the cytoplasmic side. Positions 16 to 27 (EVSCDSSGDSNS) are enriched in polar residues. Residues 49–66 (SISSSCSSSGDSGGVPRR) are compositionally biased toward low complexity. A helical transmembrane segment spans residues 118–138 (YALFYIGFACLLWSIYFAVHM). Residues 139–141 (RSR) are Extracellular-facing. The chain crosses the membrane as a helical span at residues 142 to 162 (LIVMVAPALCFLLVCVGFFLF). The Cytoplasmic portion of the chain corresponds to 163 to 171 (TFTKLYARH). A helical transmembrane segment spans residues 172-192 (YAWTSLALTLLVFALTLAAQF). The Extracellular segment spans residues 193–215 (QVLTPVSGRGDSSNLTATARPTD). An N-linked (GlcNAc...) asparagine glycan is attached at asparagine 206. Residues 216–235 (TCLSQVGSFSMCIEVLFLLY) traverse the membrane as a helical segment. Residues 236–241 (TVMHLP) are Cytoplasmic-facing. Residues 242 to 259 (LYLSLCLGVAYSVLFETF) form a helical membrane-spanning segment. Residues 260-280 (GYHFRDEACFPSPGAGALHWE) are Extracellular-facing. Residues 281-301 (LLSRGLLHGCIHAIGVHLFVM) form a helical membrane-spanning segment. The Cytoplasmic portion of the chain corresponds to 302–786 (SQVRSRSTFL…VKTFASPTFS (485 aa)). The tract at residues 349-375 (QGDEESENSVKRHATSSPKNRKKKSSI) is disordered. The segment covering 359–374 (KRHATSSPKNRKKKSS) has biased composition (basic residues). One can recognise a Guanylate cyclase 1 domain in the interval 394-521 (SILFADIVGF…NDVNLANLME (128 aa)). 3 residues coordinate Mg(2+): aspartate 399, isoleucine 400, and aspartate 443. Residues 399-404 (DIVGFT), 441-443 (LGD), and arginine 487 contribute to the ATP site. Position 610 is a phosphoserine (serine 610). Positions 642–684 (EAGAEGGAPQNGCQDEHKNSTKASGGPNPKTQNGLLSPPQEEK) are disordered. A phosphoserine mark is found at serine 688, serine 691, and serine 706. Residues 787–807 (SLLDVFLSTTVFLTLSTTCFL) traverse the membrane as a helical segment. Over 808-818 (KYEAATVPPPP) the chain is Extracellular. A helical membrane pass occupies residues 819–839 (AALAVFSAALLLEVLSLAVSI). At 840-867 (RMVFFLEDVMACTKRLLEWIAGWLPRHC) the chain is on the cytoplasmic side. The helical transmembrane segment at 868-888 (IGAILVSLPALAVYSHVTSEY) threads the bilayer. Over 889–891 (ETN) the chain is Extracellular. A helical membrane pass occupies residues 892–912 (IHFPVFTGSAALIAVVHYCNF). Residues 913–920 (CQLSSWMR) lie on the Cytoplasmic side of the membrane. The chain crosses the membrane as a helical span at residues 921 to 941 (SSLATVVGAGPLLLLYVSLCP). At 942–975 (DSSVLTSPLDAVQNFSSERNPCNSSVPRDLRRPA) the chain is on the extracellular side. N-linked (GlcNAc...) asparagine glycosylation is found at asparagine 955 and asparagine 964. The chain crosses the membrane as a helical span at residues 976–996 (SLIGQEVVLVFFLLLLLVWFL). The Cytoplasmic segment spans residues 997 to 1353 (NREFEVSYRL…LTKLNVSKSV (357 aa)). Positions 1058 to 1198 (GVIFASIVNF…DTVNIASRMD (141 aa)) constitute a Guanylate cyclase 2 domain. ATP-binding positions include lysine 1108, 1185–1187 (DIW), 1192–1196 (NIASR), and lysine 1232. Serine 1257, serine 1259, serine 1295, and serine 1307 each carry phosphoserine. A compositionally biased stretch (polar residues) spans 1292–1301 (SLGSDSSTQA). The disordered stretch occupies residues 1292–1326 (SLGSDSSTQAKDAHLSPKRPWKEPVKAEERGRFGK). Residues 1302–1326 (KDAHLSPKRPWKEPVKAEERGRFGK) are compositionally biased toward basic and acidic residues.

The protein belongs to the adenylyl cyclase class-4/guanylyl cyclase family. It depends on Mg(2+) as a cofactor. Requires Mn(2+) as cofactor. In terms of tissue distribution, detected in skeletal muscle, pancreas, lung, heart, kidney, liver, brain and placenta. Expressed in multiple cells of the lung, with expression highest in airway smooth muscle.

The protein localises to the cell membrane. It carries out the reaction ATP = 3',5'-cyclic AMP + diphosphate. With respect to regulation, insensitive to calcium/calmodulin, forskolin and somatostatin. Stimulated by beta-adrenergic receptor activation. Activity is down-regulated by calcium/calcineurin. Its function is as follows. Adenylyl cyclase that catalyzes the formation of the signaling molecule cAMP in response to activation of G protein-coupled receptors. Contributes to signaling cascades activated by CRH (corticotropin-releasing factor), corticosteroids and beta-adrenergic receptors. The polypeptide is Adenylate cyclase type 9 (ADCY9) (Homo sapiens (Human)).